The chain runs to 255 residues: Aliphatic sulfonates import ATP-binding protein SsuB (255 aa).

Residues 5-231 enclose the ABC transporter domain; the sequence is IRVNEKAFGK…PRSRTSPVFQ (227 aa). An ATP-binding site is contributed by 39–46; sequence GPSGCGKS.

This sequence belongs to the ABC transporter superfamily. Aliphatic sulfonates importer (TC 3.A.1.17.2) family. In terms of assembly, the complex is composed of two ATP-binding proteins (SsuB), two transmembrane proteins (SsuC) and a solute-binding protein (SsuA).

The protein localises to the cell membrane. The catalysed reaction is ATP + H2O + aliphatic sulfonate-[sulfonate-binding protein]Side 1 = ADP + phosphate + aliphatic sulfonateSide 2 + [sulfonate-binding protein]Side 1.. In terms of biological role, part of the ABC transporter complex SsuABC involved in aliphatic sulfonates import. Responsible for energy coupling to the transport system. This Bacillus licheniformis (strain ATCC 14580 / DSM 13 / JCM 2505 / CCUG 7422 / NBRC 12200 / NCIMB 9375 / NCTC 10341 / NRRL NRS-1264 / Gibson 46) protein is Aliphatic sulfonates import ATP-binding protein SsuB.